The chain runs to 480 residues: F-box only protein 3 (480 aa).

The region spanning 10 to 56 is the F-box domain; sequence LLTLESLPTDPLLLILSFVDYRDLINCCYVSRRLSQLSTHDPLWRRH. Residues 278–408 enclose the ApaG domain; the sequence is VATTGDITVS…FHMACPTFRV (131 aa). A compositionally biased stretch (acidic residues) spans 419–459; sequence EYEEMEEEAEEEEEEENDDSADMDESDESDEDENESDEGEG. The segment at 419-464 is disordered; sequence EYEEMEEEAEEEEEEENDDSADMDESDESDEDENESDEGEGEERRR.

In terms of assembly, part of a SCF (SKP1-cullin-F-box) protein ligase complex SCF(FBXO3) consisting of FBXO3, SKP1, CUL1 and RBX1. Interacts with PML, interaction is direct and takes place either alone or within the SCF complex.

The protein localises to the nucleus. Its pathway is protein modification; protein ubiquitination. Its function is as follows. Substrate recognition component of the SCF (SKP1-CUL1-F-box protein)-type E3 ubiquitin ligase complex, SCF(FBXO3), which mediates the ubiquitination and subsequent proteasomal degradation of target proteins. Mediates the ubiquitination of HIPK2 and probably that of EP300, leading to rapid degradation by the proteasome. In the presence of PML, HIPK2 ubiquitination still occurs, but degradation is prevented. PML, HIPK2 and FBXO3 may act synergically to activate p53/TP53-dependent transactivation. The SCF(FBXO3) also acts as a regulator of inflammation by mediating ubiquitination and degradation of FBXL2 in response to lipopolysaccharide (LPS). The SCF(FBXO3) complex specifically recognizes FBXL2 phosphorylated at 'Thr-404' and promotes its ubiquitination. The protein is F-box only protein 3 (Fbxo3) of Rattus norvegicus (Rat).